Here is a 193-residue protein sequence, read N- to C-terminus: SCO1 protein homolog (193 aa).

Positions 1–18 (MKVIKGLTAGLIFLFLCA) are cleaved as a signal peptide. C19 carries the N-palmitoyl cysteine lipid modification. C19 carries S-diacylglycerol cysteine lipidation. Positions 26 to 191 (DPLNYEVEPF…IISDVKSAST (166 aa)) constitute a Thioredoxin domain. 3 residues coordinate Cu cation: C64, C68, and H154.

The protein belongs to the SCO1/2 family. In terms of assembly, monomer.

It localises to the cell membrane. Its function is as follows. Necessary for insertion of copper into the active site of cytochrome c oxidase. May play a role in copper homeostasis or redox signaling. The chain is SCO1 protein homolog (ypmQ) from Bacillus subtilis (strain 168).